We begin with the raw amino-acid sequence, 253 residues long: 3-deoxy-manno-octulosonate cytidylyltransferase (253 aa).

This sequence belongs to the KdsB family.

It is found in the cytoplasm. The catalysed reaction is 3-deoxy-alpha-D-manno-oct-2-ulosonate + CTP = CMP-3-deoxy-beta-D-manno-octulosonate + diphosphate. It participates in nucleotide-sugar biosynthesis; CMP-3-deoxy-D-manno-octulosonate biosynthesis; CMP-3-deoxy-D-manno-octulosonate from 3-deoxy-D-manno-octulosonate and CTP: step 1/1. Its pathway is bacterial outer membrane biogenesis; lipopolysaccharide biosynthesis. Functionally, activates KDO (a required 8-carbon sugar) for incorporation into bacterial lipopolysaccharide in Gram-negative bacteria. The sequence is that of 3-deoxy-manno-octulosonate cytidylyltransferase from Aeromonas hydrophila subsp. hydrophila (strain ATCC 7966 / DSM 30187 / BCRC 13018 / CCUG 14551 / JCM 1027 / KCTC 2358 / NCIMB 9240 / NCTC 8049).